The sequence spans 106 residues: uncharacterized protein (106 aa).

Residues 24 to 35 (ANSISSTSFYHK) are compositionally biased toward polar residues. Disordered stretches follow at residues 24–49 (ANSISSTSFYHKSSNNNSHANASCEE) and 65–87 (LTAESSNHHSLSASNQPASSSDE). 2 stretches are compositionally biased toward low complexity: residues 36 to 46 (SSNNNSHANAS) and 74 to 85 (SLSASNQPASSS).

This is an uncharacterized protein from Arabidopsis thaliana (Mouse-ear cress).